A 690-amino-acid chain; its full sequence is Glycine--tRNA ligase beta subunit (690 aa).

It belongs to the class-II aminoacyl-tRNA synthetase family. In terms of assembly, tetramer of two alpha and two beta subunits.

The protein resides in the cytoplasm. It carries out the reaction tRNA(Gly) + glycine + ATP = glycyl-tRNA(Gly) + AMP + diphosphate. The sequence is that of Glycine--tRNA ligase beta subunit from Buchnera aphidicola subsp. Acyrthosiphon pisum (strain Tuc7).